The following is a 544-amino-acid chain: Chaperonin GroEL 1 (544 aa).

ATP is bound by residues 30–33, lysine 51, 87–91, glycine 415, and aspartate 494; these read TLGP and DGTTT.

This sequence belongs to the chaperonin (HSP60) family. As to quaternary structure, forms a cylinder of 14 subunits composed of two heptameric rings stacked back-to-back. Interacts with the co-chaperonin GroES.

Its subcellular location is the cytoplasm. The catalysed reaction is ATP + H2O + a folded polypeptide = ADP + phosphate + an unfolded polypeptide.. In terms of biological role, together with its co-chaperonin GroES, plays an essential role in assisting protein folding. The GroEL-GroES system forms a nano-cage that allows encapsulation of the non-native substrate proteins and provides a physical environment optimized to promote and accelerate protein folding. This Syntrophus aciditrophicus (strain SB) protein is Chaperonin GroEL 1.